Reading from the N-terminus, the 301-residue chain is MSVREKMLEILEGIDIRFKEPLHSYSYTKVGGEPDYLVFPRNRCELARLKRFSNQEHIPWMVLGNASNIIVRDGGIRGFVILCDKLNNVSVDGYTIEAEAGANLIETTRIALRHSLTGFEFACGIPGSVGGAVFMNAGAYGGEIAHILQSCKVLTKDGEIETLSAKDLAFGYRHSAIQESGSVVLSAKFALAPGTHQVIKQEMDRLTHLRELKQPLEYPSCGSVFKRPVGHFAGQLISEAGLKGYRIGGVEVSEKHAGFMINVADGTAKDYEDLIESVIEKVKEHSGVTLEREVRILGESK.

The 165-residue stretch at 30-194 (VGGEPDYLVF…LSAKFALAPG (165 aa)) folds into the FAD-binding PCMH-type domain. Arg-173 is a catalytic residue. Residue Ser-223 is the Proton donor of the active site. Residue Glu-293 is part of the active site.

The protein belongs to the MurB family. It depends on FAD as a cofactor.

Its subcellular location is the cytoplasm. The catalysed reaction is UDP-N-acetyl-alpha-D-muramate + NADP(+) = UDP-N-acetyl-3-O-(1-carboxyvinyl)-alpha-D-glucosamine + NADPH + H(+). It participates in cell wall biogenesis; peptidoglycan biosynthesis. Its function is as follows. Cell wall formation. The chain is UDP-N-acetylenolpyruvoylglucosamine reductase from Streptococcus pneumoniae (strain CGSP14).